The primary structure comprises 431 residues: Adenylosuccinate synthetase (431 aa).

Residues Gly-13–Lys-19 and Gly-41–Thr-43 each bind GTP. The active-site Proton acceptor is the Asp-14. Asp-14 and Gly-41 together coordinate Mg(2+). IMP is bound by residues Asp-14–Lys-17, Asn-39–His-42, Thr-130, Arg-144, Gln-225, Thr-240, and Arg-304. The active-site Proton donor is His-42. A substrate-binding site is contributed by Ala-300 to Arg-306. GTP-binding positions include Arg-306, Lys-332–Asp-334, and Ser-415–Gly-417.

It belongs to the adenylosuccinate synthetase family. As to quaternary structure, homodimer. It depends on Mg(2+) as a cofactor.

The protein resides in the cytoplasm. It catalyses the reaction IMP + L-aspartate + GTP = N(6)-(1,2-dicarboxyethyl)-AMP + GDP + phosphate + 2 H(+). It functions in the pathway purine metabolism; AMP biosynthesis via de novo pathway; AMP from IMP: step 1/2. In terms of biological role, plays an important role in the de novo pathway of purine nucleotide biosynthesis. Catalyzes the first committed step in the biosynthesis of AMP from IMP. The sequence is that of Adenylosuccinate synthetase from Shewanella denitrificans (strain OS217 / ATCC BAA-1090 / DSM 15013).